Here is a 981-residue protein sequence, read N- to C-terminus: Transcription factor TAC1 (981 aa).

Residues 1–29 (MDTSSSSGTHPSTFNNLTKQQELTGNDPN) show a composition bias toward polar residues. The interval 1 to 33 (MDTSSSSGTHPSTFNNLTKQQELTGNDPNDTNR) is disordered. The segment at residues 40 to 68 (CDSCRRKKIKCNGSYPCGNCIQAKNTSNC) is a DNA-binding region (zn(2)-C6 fungal-type). Disordered stretches follow at residues 74 to 106 (PVRK…TFSG), 165 to 199 (HSNS…TSHS), and 868 to 902 (LRDN…SNST). The span at 165–177 (HSNSSMFNNNSLS) shows a compositional bias: low complexity. Positions 868–880 (LRDNSTNHGQNNM) are enriched in polar residues. Over residues 881–902 (NPSPTITNNTYNSNINTGSNST) the composition is skewed to low complexity.

Phosphorylated. Phosphorylation leads to hyperactivation.

Its subcellular location is the nucleus. Drugs such as farnesol and 1-dodecanol are able to hyperactivate TAC1 probably via phosphorylation by the Mediator complex. Its function is as follows. Transcriptional activator of drug-responsive genes including the ABC-type transporters CDR1 and CDR2, as well as HSP12 and RTA3. Binds the cis-acting regulatory drug-responsive elements (DREs) with the consensus sequence 5'-CGGAWATCGGATATTTTTTT-3' in the promoters of target genes. This is Transcription factor TAC1 from Candida albicans (strain SC5314 / ATCC MYA-2876) (Yeast).